Here is a 298-residue protein sequence, read N- to C-terminus: Ribosomal protein L11 methyltransferase (298 aa).

S-adenosyl-L-methionine-binding residues include Thr-150, Gly-171, Asp-193, and Asn-232.

This sequence belongs to the methyltransferase superfamily. PrmA family.

It localises to the cytoplasm. The enzyme catalyses L-lysyl-[protein] + 3 S-adenosyl-L-methionine = N(6),N(6),N(6)-trimethyl-L-lysyl-[protein] + 3 S-adenosyl-L-homocysteine + 3 H(+). Functionally, methylates ribosomal protein L11. The protein is Ribosomal protein L11 methyltransferase of Chromobacterium violaceum (strain ATCC 12472 / DSM 30191 / JCM 1249 / CCUG 213 / NBRC 12614 / NCIMB 9131 / NCTC 9757 / MK).